The chain runs to 641 residues: WW domain-binding protein 11 (641 aa).

Residues 1 to 11 (MGRRSTSSTKS) show a composition bias toward polar residues. The interval 1-37 (MGRRSTSSTKSGKFMNPTDQARKEARKRELKKNKKQR) is disordered. Positions 1–45 (MGRRSTSSTKSGKFMNPTDQARKEARKRELKKNKKQRMMVRAAVL) are required for nuclear import. Position 13 is an N6-acetyllysine (lysine 13). Over residues 28–37 (RELKKNKKQR) the composition is skewed to basic residues. Residues 75–133 (EKVLKDKRKKLRETFERILRLYEKENPDIYKELRKLEVEYEQKRAQLSQYFDAVKNAQH) are a coiled coil. Serine 181 is subject to Phosphoserine. Residues 186 to 213 (LGHGVPRLPPGRKPPGPPPGPPPPQVVQ) form a disordered region. Arginine 192 is modified (omega-N-methylarginine). The span at 192 to 210 (RLPPGRKPPGPPPGPPPPQ) shows a compositional bias: pro residues. The segment at 217 to 221 (RKVGF) is interaction with PP1. Tyrosine 236 carries the post-translational modification Phosphotyrosine. The disordered stretch occupies residues 236–552 (YSPELAQRGH…RPKADDTSAA (317 aa)). Position 237 is a phosphoserine (serine 237). Residues 253–263 (SEDDGYPEDMD) are compositionally biased toward acidic residues. Residues 276–304 (TDKSDGESDGDEFVHRDNGERDNNEEKKS) are compositionally biased toward basic and acidic residues. Serine 279 and serine 283 each carry phosphoserine. The segment at 306 to 310 (LSVRF) is interaction with PP1. A compositionally biased stretch (acidic residues) spans 351–365 (EFSEDDDEDDSDDSE). Phosphoserine occurs at positions 353, 361, and 364. Basic and acidic residues predominate over residues 366–380 (AEKQSQKQHKEESHS). The span at 386 to 404 (ASSQQQAPPQSVPPSQIQA) shows a compositional bias: low complexity. 3 stretches are compositionally biased toward pro residues: residues 405 to 447 (PPMP…PPGM), 456 to 504 (RLLP…PPRP), and 510 to 530 (PLVP…PLPN). A PGR motif is present at residues 455 to 466 (PRLLPPGPPPGR). A Glycyl lysine isopeptide (Lys-Gly) (interchain with G-Cter in SUMO2) cross-link involves residue lysine 557. Lysine 565 is subject to N6-acetyllysine. Residue lysine 572 forms a Glycyl lysine isopeptide (Lys-Gly) (interchain with G-Cter in SUMO2) linkage. A disordered region spans residues 587–623 (RENKGATAAPQRKSEDDSAVPLAKAAPKSGPSVPVSV). Serine 600 is modified (phosphoserine).

In terms of assembly, interacts with PPP1CA, PPP1CB and PPP1CC. Interacts via the PGR motif with PQBP1 in the nucleus. Interacts with the WW domains of WBP4. In terms of tissue distribution, ubiquitous. Highly expressed in the heart, pancreas, kidney skeletal muscle, placenta and brain (at protein level). Weakly expressed in liver and lung.

The protein resides in the nucleus. The protein localises to the cytoplasm. Functionally, activates pre-mRNA splicing. May inhibit PP1 phosphatase activity. The sequence is that of WW domain-binding protein 11 from Homo sapiens (Human).